The sequence spans 277 residues: 4-hydroxy-tetrahydrodipicolinate reductase (277 aa).

9 to 14 (GATGRM) lines the NAD(+) pocket. Position 37 (K37) interacts with NADP(+). 75–77 (GTS) serves as a coordination point for NAD(+). H132 functions as the Proton donor/acceptor in the catalytic mechanism. K136 serves as the catalytic Proton donor. Residue 142–143 (GT) coordinates (S)-2,3,4,5-tetrahydrodipicolinate. 2 disordered regions span residues 154 to 173 (ARGA…ARGQ) and 247 to 277 (ERAA…VTSA). A compositionally biased stretch (low complexity) spans 250–265 (AQAAAGDAPSGPVDDG).

It belongs to the DapB family.

Its subcellular location is the cytoplasm. The enzyme catalyses (S)-2,3,4,5-tetrahydrodipicolinate + NAD(+) + H2O = (2S,4S)-4-hydroxy-2,3,4,5-tetrahydrodipicolinate + NADH + H(+). The catalysed reaction is (S)-2,3,4,5-tetrahydrodipicolinate + NADP(+) + H2O = (2S,4S)-4-hydroxy-2,3,4,5-tetrahydrodipicolinate + NADPH + H(+). It participates in amino-acid biosynthesis; L-lysine biosynthesis via DAP pathway; (S)-tetrahydrodipicolinate from L-aspartate: step 4/4. Catalyzes the conversion of 4-hydroxy-tetrahydrodipicolinate (HTPA) to tetrahydrodipicolinate. This is 4-hydroxy-tetrahydrodipicolinate reductase from Clavibacter michiganensis subsp. michiganensis (strain NCPPB 382).